The primary structure comprises 226 residues: 3-dehydroquinate dehydratase (226 aa).

Residues 33 to 35 (EWR) and arginine 65 each bind 3-dehydroquinate. Histidine 121 acts as the Proton donor/acceptor in catalysis. Residue lysine 146 is the Schiff-base intermediate with substrate of the active site. Positions 188, 207, and 211 each coordinate 3-dehydroquinate.

This sequence belongs to the type-I 3-dehydroquinase family. As to quaternary structure, homodimer.

The catalysed reaction is 3-dehydroquinate = 3-dehydroshikimate + H2O. It functions in the pathway metabolic intermediate biosynthesis; chorismate biosynthesis; chorismate from D-erythrose 4-phosphate and phosphoenolpyruvate: step 3/7. Functionally, involved in the third step of the chorismate pathway, which leads to the biosynthesis of aromatic amino acids. Catalyzes the cis-dehydration of 3-dehydroquinate (DHQ) and introduces the first double bond of the aromatic ring to yield 3-dehydroshikimate. This is 3-dehydroquinate dehydratase from Lactococcus lactis subsp. lactis (strain IL1403) (Streptococcus lactis).